The following is a 692-amino-acid chain: Elongation factor G (692 aa).

The tr-type G domain maps to 8 to 282; it reads DKTRNIGIMA…AVLDYLPAPT (275 aa). GTP-binding positions include 17 to 24, 81 to 85, and 135 to 138; these read AHIDAGKT, DTPGH, and NKMD.

It belongs to the TRAFAC class translation factor GTPase superfamily. Classic translation factor GTPase family. EF-G/EF-2 subfamily.

It is found in the cytoplasm. Functionally, catalyzes the GTP-dependent ribosomal translocation step during translation elongation. During this step, the ribosome changes from the pre-translocational (PRE) to the post-translocational (POST) state as the newly formed A-site-bound peptidyl-tRNA and P-site-bound deacylated tRNA move to the P and E sites, respectively. Catalyzes the coordinated movement of the two tRNA molecules, the mRNA and conformational changes in the ribosome. The sequence is that of Elongation factor G from Bacillus pumilus (strain SAFR-032).